The sequence spans 338 residues: Solute carrier family 35 member G5 (338 aa).

Residues 1–21 (MAGSHPYFNLPDSTHPSPPSA) are disordered. Transmembrane regions (helical) follow at residues 37–57 (TNGL…VGPL), 67–87 (LPSL…ALPL), 105–125 (CFCA…VQVV), 160–180 (CGLL…LWTL), 190–210 (ALGY…LLVY), 221–241 (TVAF…LFVL), 250–270 (LLSW…FTCV), 281–301 (LVCA…YYVL), and 305–325 (VAPF…IITA). In terms of domain architecture, EamA 1 spans 49–174 (LPAGFVGPLS…SILGLIIIVG (126 aa)). Residues 272–325 (YAVTKAHPALVCAVLHSEVVVALILQYYVLHETVAPFDITGAGIVLGSIAIITA) enclose the EamA 2 domain.

The protein belongs to the SLC35G solute transporter family.

The protein localises to the membrane. This Pan paniscus (Pygmy chimpanzee) protein is Solute carrier family 35 member G5 (SLC35G5).